A 198-amino-acid chain; its full sequence is Carnitine operon protein CaiE (198 aa).

Residues 174 to 198 (KPLTQAEENRPRLKGTTDVKPKSAQ) form a disordered region. Residues 180 to 198 (EENRPRLKGTTDVKPKSAQ) show a composition bias toward basic and acidic residues.

The protein belongs to the transferase hexapeptide repeat family.

It participates in amine and polyamine metabolism; carnitine metabolism. Functionally, overproduction of CaiE stimulates the activity of CaiB and CaiD. This Salmonella typhimurium (strain LT2 / SGSC1412 / ATCC 700720) protein is Carnitine operon protein CaiE.